The primary structure comprises 198 residues: Cyclin-dependent kinase inhibitor 1B (198 aa).

Positions 1-11 are enriched in polar residues; that stretch reads MSNVRVSNGSP. The segment at 1–34 is disordered; it reads MSNVRVSNGSPSLERMDARQAEHPKPSACRNLFG. Residue S10 is modified to Phosphoserine; by UHMK1. Over residues 14–25 the composition is skewed to basic and acidic residues; sequence ERMDARQAEHPK. Positions 51–91 are interaction with CDK2; sequence DMEEASQRKWNFDFQNHNPLEGRYQWQEVDKGSLPEFYYRP. The residue at position 74 (Y74) is a Phosphotyrosine; by SRC. Residues 85–198 form a disordered region; that stretch reads PEFYYRPPRP…KKPGLRRHQT (114 aa). Y88 is modified (phosphotyrosine; by ABL, LYN and SRC). At Y89 the chain carries Phosphotyrosine. Residues 104 to 124 are compositionally biased toward polar residues; sequence QESQDVSGSRQAVPSIGSQAY. The short motif at 153 to 169 is the Nuclear localization signal element; that stretch reads KRPAADDSSSQNKRANR. The residue at position 170 (T170) is a Phosphothreonine. A compositionally biased stretch (polar residues) spans 175–186; sequence SDGSLNAGSVEQ. Position 187 is a phosphothreonine; by PKB/AKT1, CDK1 and CDK2 (T187). The residue at position 198 (T198) is a Phosphothreonine; by CaMK1, PKB/AKT1, RPS6KA1, RPS6KA3 and PIM1.

The protein belongs to the CDI family. In terms of assembly, forms a ternary complex composed of CCNE1, CDK2 and CDKN1B. Interacts directly with CCNE1; the interaction is inhibited by CDK2-dependent phosphorylation on Thr-187. Interacts with COPS5, subunit of the COP9 signalosome complex; the interaction leads to CDKN1B degradation. Interacts with NUP50; the interaction leads to nuclear import and degradation of phosphorylated CDKN1B. Interacts with CCND1 and SNX6. Interacts (Thr-198-phosphorylated form) with 14-3-3 proteins, binds strongly YWHAQ, weakly YWHAE and YWHAH, but not YWHAB nor YWHAZ; the interaction with YWHAQ results in translocation to the cytoplasm. Interacts with AKT1 and LYN; the interactions lead to cytoplasmic mislocation, phosphorylation of CDKN1B and inhibition of cell cycle arrest. Forms a ternary complex with CCNA2 and CDK2; CDKN1B inhibits the kinase activity of CDK2 through conformational rearrangements. Interacts (unphosphorylated form) with CDK2. Forms a complex with CDK2 and SPDYA, but does not directly interact with SPDYA. Forms a ternary complex composed of cyclin D, CDK4 and CDKN1B. Interacts (phosphorylated on Tyr-88 and Tyr-89) with CDK4; the interaction is required for cyclin D and CDK4 complex assembly, induces nuclear translocation and activates the CDK4 kinase activity. Interacts with GRB2. Interacts with PIM1. Identified in a complex with SKP1, SKP2 and CKS1B. Interacts with UHMK1; the interaction leads to cytoplasmic mislocation, phosphorylation of CDKN1B and inhibition of cell cycle arrest. Also interacts with CDK1. Dephosphorylated on Thr-187 by PPM1H, leading to CDKN1B stability. Phosphorylated; phosphorylation occurs on serine, threonine and tyrosine residues. Phosphorylation on Ser-10 is the major site of phosphorylation in resting cells, takes place at the G(0)-G(1) phase and leads to protein stability. Phosphorylation on other sites is greatly enhanced by mitogens, growth factors, cMYC and in certain cancer cell lines. The phosphorylated form found in the cytoplasm is inactivate. Phosphorylation on Thr-198 is required for interaction with 14-3-3 proteins. Phosphorylation on Thr-187, by CDK1 and CDK2 leads to protein ubiquitination and proteasomal degradation. Tyrosine phosphorylation promotes this process. Phosphorylation by PKB/AKT1 can be suppressed by LY294002, an inhibitor of the catalytic subunit of PI3K. Phosphorylation on Tyr-88 and Tyr-89 has no effect on binding CDK2, but is required for binding CDK4. Dephosphorylated on tyrosine residues by G-CSF. Dephosphorylated on Thr-187 by PPM1H, leading to CDKN1B stability. In terms of processing, ubiquitinated; in the cytoplasm by the KPC complex (composed of RNF123/KPC1 and UBAC1/KPC2) and, in the nucleus, by SCF(SKP2). The latter requires prior phosphorylation on Thr-187. Ubiquitinated; by a TRIM21-containing SCF(SKP2)-like complex; leads to its degradation. Post-translationally, subject to degradation in the lysosome. Interaction with SNX6 promotes lysosomal degradation.

The protein resides in the nucleus. The protein localises to the cytoplasm. It is found in the endosome. Functionally, important regulator of cell cycle progression. Inhibits the kinase activity of CDK2 bound to cyclin A, but has little inhibitory activity on CDK2 bound to SPDYA. Involved in G1 arrest. Potent inhibitor of cyclin E- and cyclin A-CDK2 complexes. Forms a complex with cyclin type D-CDK4 complexes and is involved in the assembly, stability, and modulation of CCND1-CDK4 complex activation. Acts either as an inhibitor or an activator of cyclin type D-CDK4 complexes depending on its phosphorylation state and/or stoichometry. The protein is Cyclin-dependent kinase inhibitor 1B (CDKN1B) of Cricetulus griseus (Chinese hamster).